A 1194-amino-acid polypeptide reads, in one-letter code: MRTNCWWRLSGYVMRHRRDLLLGFGAALAGTVIAVLVPLVTKRVIDDAIAADHRPLAPWAVVLVAAAGATYLLMYVRRYYGGRIAHLVQHDLRMDAFQALLRWDGRQQDRWSSGQLIVRTTNDLQLVQALLFDVPNVLRHVLTLLLGVAVMTWLSVPLALLAVLLVPVIGLIAHRSRRLLAAATHCAQEHKAAVTGVVDAAVCGIRVVKAFGQEERETVKLVTASRALYAAQLRVARLNAHFGPLLQTLPALGQMAVFALGGWMAAQGSITVGTFVAFWACLTLLARPACDLAGMLTIAQQARAGAVRVLELIDSRPTLVDGTKPLSPEARLSLEFQRVSFGYVADRPVLREISLSVRAGETLAVVGAPGSGKSTLASLATRCYDVTQGAVRIGGQDVRELTLDSLRSAIGLVPEDAVLFSGTIGANIAYGRPDATPEQIATAARAAHIEEFVNTLPDGYQTAVGARGLTLSGGQRQRIALARALLHQPRLLIMDDPTSAVDAVIECGIQEVLREAIADRTAVIFTRRRSMLTLADRVAVLDSGRLLDVGTPDEVWERCPRYRELLSPAPDLADDLVVAERSPVCRPVAGLGTKAAQHTNVHNPGPHDHPPGPDPLRRLLREFRGPLALSLLLVAVQTCAGLLPPLLIRHGIDVGIRRHVLSALWWAALAGTATVVIRWVVQWGSAMVAGYTGEQVLFRLRSVVFAHAQRLGLDAFEDDGDAQIVTAVTADVEAIVAFLRTGLVVAVISVVTLVGILVALLAIRARLVLLIFTTMPVLALATWQFRRASNWTYRRARHRLGTVTATLREYAAGLRIAQAFRAEYRGLQSYFAHSDDYRRLGVRGQRLLALYYPFVALLCSLATTLVLLDGAREVRAGVISVGALVTYLLYIELLYTPIGELAQMFDDYQRAAVAAGRIRSLLSTRTPSSPAARPVGTLRGEVVFDAVHYSYRTREVPALAGINLRIPAGQTVVFVGSTGSGKSTLIKLVARFYDPTHGTVRVDGCDLREFDVDGYRNRLGIVTQEQYVFAGTVRDAIAYGRPDATDAQVERAAREVGAHPMITALDNGYLHQVTAGGRNLSAGQLQLLALARARLVDPDILLLDEATVALDPATEAVVQRATLTLAARRTTLIVAHGLAIAEHADRIVVLEHGTVVEDGAHTELLAAGGHYSRLWAAHTRLCSPEITQLQCIDA.

The next 6 helical transmembrane spans lie at 20–40 (LLLG…VPLV), 56–76 (LAPW…LMYV), 130–150 (LLFD…GVAV), 153–173 (WLSV…GLIA), 258–278 (FALG…FVAF), and 279–299 (WACL…LTIA). Residues 21–301 (LLGFGAALAG…LAGMLTIAQQ (281 aa)) form the ABC transmembrane type-1 1 domain. An ABC transporter 1 domain is found at 334-568 (LEFQRVSFGY…CPRYRELLSP (235 aa)). 367-374 (GAPGSGKS) contributes to the ATP binding site. Transmembrane regions (helical) follow at residues 628-648 (ALSL…PLLI), 660-680 (VLSA…IRWV), 743-763 (LVVA…LLAI), 765-785 (ARLV…TWQF), 847-867 (LLAL…TLVL), and 878-898 (VISV…YTPI). Residues 628 to 910 (ALSLLLVAVQ…LAQMFDDYQR (283 aa)) form the ABC transmembrane type-1 2 domain. Positions 942 to 1177 (VVFDAVHYSY…GGHYSRLWAA (236 aa)) constitute an ABC transporter 2 domain. 976 to 983 (GSTGSGKS) serves as a coordination point for ATP.

Belongs to the ABC transporter superfamily. Lipid exporter (TC 3.A.1.106) family.

It localises to the cell inner membrane. Efflux is inhibited by reserpine. In terms of biological role, overexpression in M.smegmatis increases resistance to erythromycin, ampicillin, novobiocin and vancomycin. It also reduces accumulation of ethidium bromide in the cell. The sequence is that of Multidrug efflux ATP-binding/permease protein Rv0194 from Mycobacterium tuberculosis (strain ATCC 25618 / H37Rv).